Reading from the N-terminus, the 888-residue chain is Alanine--tRNA ligase (888 aa).

Zn(2+)-binding residues include His-570, His-574, Cys-673, and His-677.

It belongs to the class-II aminoacyl-tRNA synthetase family. Zn(2+) is required as a cofactor.

The protein localises to the cytoplasm. It carries out the reaction tRNA(Ala) + L-alanine + ATP = L-alanyl-tRNA(Ala) + AMP + diphosphate. Catalyzes the attachment of alanine to tRNA(Ala) in a two-step reaction: alanine is first activated by ATP to form Ala-AMP and then transferred to the acceptor end of tRNA(Ala). Also edits incorrectly charged Ser-tRNA(Ala) and Gly-tRNA(Ala) via its editing domain. The protein is Alanine--tRNA ligase of Chlorobium phaeobacteroides (strain DSM 266 / SMG 266 / 2430).